A 475-amino-acid chain; its full sequence is PRAME family member 20 (475 aa).

The LRR 1; degenerate repeat unit spans residues 97–124 (RWKLQVLDLQDVSENFWMVWSEAMARRC). One copy of the LRR 2; degenerate repeat lies at 179-203 (HLCCKKLKMLGMLFHNIRNILKTVN). The stretch at 204-230 (LDCIQEVEVNCNWTLPVLAEFTPYLGQ) is one LRR 3; degenerate repeat. One copy of the LRR 4; degenerate repeat lies at 231-265 (MRNLRKLVLSDIDSRYISPEQKKEFVTQFTTQFLK). 5 LRR repeats span residues 266–291 (LRCL…LSCL), 292–323 (KTSL…GQLK), 324–342 (TLDL…PLQV), 348–375 (AATL…ALSR), and 376–400 (CFEL…LLCH).

Belongs to the PRAME family.

The chain is PRAME family member 20 from Homo sapiens (Human).